A 29-amino-acid chain; its full sequence is Myosin heavy chain, muscle (29 aa).

Positions 1–16 are enriched in basic and acidic residues; the sequence is SKYESEGVARSEELQE. The disordered stretch occupies residues 1–29; that stretch reads SKYESEGVARSEELQEVHQAFADAGRKPI.

In terms of assembly, muscle myosin is a hexameric protein that consists of 2 heavy chain subunits (MHC), 2 alkali light chain subunits (MLC) and 2 regulatory light chain subunits (MLC-2).

The protein resides in the cytoplasm. Its subcellular location is the myofibril. Its function is as follows. Muscle contraction. This chain is Myosin heavy chain, muscle, found in Bombyx mori (Silk moth).